A 209-amino-acid chain; its full sequence is Probable GTP-binding protein EngB (209 aa).

One can recognise an EngB-type G domain in the interval 12 to 203 (VSFEIIFVGR…RDRLHEMKRD (192 aa)). Residues 20–27 (GRSNVGKS), 45–49 (GVTLR), 62–65 (DMPG), 142–145 (NKMD), and 179–181 (ISA) contribute to the GTP site. Mg(2+)-binding residues include Ser-27 and Thr-47.

Belongs to the TRAFAC class TrmE-Era-EngA-EngB-Septin-like GTPase superfamily. EngB GTPase family. It depends on Mg(2+) as a cofactor.

Functionally, necessary for normal cell division and for the maintenance of normal septation. This is Probable GTP-binding protein EngB from Methanosarcina barkeri (strain Fusaro / DSM 804).